Reading from the N-terminus, the 672-residue chain is UvrABC system protein B (672 aa).

Positions 26–181 (AGLEDGLAYQ…ILQRLAELQY (156 aa)) constitute a Helicase ATP-binding domain. 39–46 (GVTGSGKT) lines the ATP pocket. Residues 92–115 (YYDYYQPEAYVPSSDTYIEKDASI) carry the Beta-hairpin motif. The region spanning 430 to 592 (QVDDLLSEIK…ITPKSIQKAV (163 aa)) is the Helicase C-terminal domain. Residues 631–666 (AKELRKLEEQMYHHARNLEFEEAAAVRDKIQHIRKG) enclose the UVR domain.

Belongs to the UvrB family. As to quaternary structure, forms a heterotetramer with UvrA during the search for lesions. Interacts with UvrC in an incision complex.

Its subcellular location is the cytoplasm. In terms of biological role, the UvrABC repair system catalyzes the recognition and processing of DNA lesions. A damage recognition complex composed of 2 UvrA and 2 UvrB subunits scans DNA for abnormalities. Upon binding of the UvrA(2)B(2) complex to a putative damaged site, the DNA wraps around one UvrB monomer. DNA wrap is dependent on ATP binding by UvrB and probably causes local melting of the DNA helix, facilitating insertion of UvrB beta-hairpin between the DNA strands. Then UvrB probes one DNA strand for the presence of a lesion. If a lesion is found the UvrA subunits dissociate and the UvrB-DNA preincision complex is formed. This complex is subsequently bound by UvrC and the second UvrB is released. If no lesion is found, the DNA wraps around the other UvrB subunit that will check the other stand for damage. This chain is UvrABC system protein B, found in Coxiella burnetii (strain CbuG_Q212) (Coxiella burnetii (strain Q212)).